The chain runs to 324 residues: D-alanine--D-alanine ligase (324 aa).

The ATP-grasp domain maps to 121 to 321; that stretch reads NQYLKAFGVR…IKDVMTDIIE (201 aa). Residue 149-204 participates in ATP binding; it reads MEKIGLPCFIKPSLGGSSFGVTKVKTKEQIQPAIVKAFEEAQEVLVEAFMEGTELT. 3 residues coordinate Mg(2+): Asp275, Glu288, and Asn290.

Belongs to the D-alanine--D-alanine ligase family. Mg(2+) is required as a cofactor. Mn(2+) serves as cofactor.

It is found in the cytoplasm. The enzyme catalyses 2 D-alanine + ATP = D-alanyl-D-alanine + ADP + phosphate + H(+). Its pathway is cell wall biogenesis; peptidoglycan biosynthesis. Its function is as follows. Cell wall formation. The sequence is that of D-alanine--D-alanine ligase from Bacteroides thetaiotaomicron (strain ATCC 29148 / DSM 2079 / JCM 5827 / CCUG 10774 / NCTC 10582 / VPI-5482 / E50).